The sequence spans 1386 residues: Adhesin AWP3b (1386 aa).

The N-terminal stretch at 1 to 19 is a signal peptide; that stretch reads MISFVTLLAILGLLSISWA. 3 disulfides stabilise this stretch: cysteine 115/cysteine 145, cysteine 144/cysteine 178, and cysteine 304/cysteine 341. An N-linked (GlcNAc...) asparagine glycan is attached at asparagine 117. N-linked (GlcNAc...) asparagine glycans are attached at residues asparagine 315, asparagine 345, asparagine 468, and asparagine 526. A disordered region spans residues 429 to 507; the sequence is TTDSPGHTIT…SSPTSDFSSV (79 aa). Disordered stretches follow at residues 530-553 and 612-690; these read IVDS…SSSM and TTDS…FSSV. 2 N-linked (GlcNAc...) asparagine glycosylation sites follow: asparagine 651 and asparagine 709. Disordered regions lie at residues 714 to 739 and 795 to 873; these read VDSS…MSSS and TTDS…FSSV. Residues asparagine 834, asparagine 898, asparagine 1008, asparagine 1017, and asparagine 1096 are each glycosylated (N-linked (GlcNAc...) asparagine). Positions 1000–1032 are disordered; the sequence is TIQESELSNTSRTTMTSNSSVSISSTSSRSSFS. Composition is skewed to polar residues over residues 1140–1150 and 1159–1177; these read SHPVATNSGDK and QVST…SSFD. The disordered stretch occupies residues 1140–1186; it reads SHPVATNSGDKPTTPKRSEQVSTTMTSSGPTPDTSSFDTDGMSAYSR. Residue asparagine 1197 is glycosylated (N-linked (GlcNAc...) asparagine). Positions 1198 to 1218 are enriched in polar residues; that stretch reads KSSTSQLGNNKQTFSNLQLES. A disordered region spans residues 1198–1227; it reads KSSTSQLGNNKQTFSNLQLESTRPHSENEV. Asparagine 1229 carries an N-linked (GlcNAc...) asparagine glycan. Over residues 1241 to 1259 the composition is skewed to polar residues; sequence STYGTNNVNPLSPTGSISI. The interval 1241 to 1269 is disordered; that stretch reads STYGTNNVNPLSPTGSISIPLTEDGQGDN. N-linked (GlcNAc...) asparagine glycosylation is present at asparagine 1287.

It is found in the secreted. The protein localises to the cell wall. May play a role in cell adhesion. The sequence is that of Adhesin AWP3b from Candida glabrata (strain ATCC 2001 / BCRC 20586 / JCM 3761 / NBRC 0622 / NRRL Y-65 / CBS 138) (Yeast).